The following is a 167-amino-acid chain: Crossover junction endodeoxyribonuclease RuvC (167 aa).

Residues aspartate 8, glutamate 68, and aspartate 140 contribute to the active site. Mg(2+) contacts are provided by aspartate 8, glutamate 68, and aspartate 140.

The protein belongs to the RuvC family. As to quaternary structure, homodimer which binds Holliday junction (HJ) DNA. The HJ becomes 2-fold symmetrical on binding to RuvC with unstacked arms; it has a different conformation from HJ DNA in complex with RuvA. In the full resolvosome a probable DNA-RuvA(4)-RuvB(12)-RuvC(2) complex forms which resolves the HJ. Requires Mg(2+) as cofactor.

The protein resides in the cytoplasm. It carries out the reaction Endonucleolytic cleavage at a junction such as a reciprocal single-stranded crossover between two homologous DNA duplexes (Holliday junction).. Functionally, the RuvA-RuvB-RuvC complex processes Holliday junction (HJ) DNA during genetic recombination and DNA repair. Endonuclease that resolves HJ intermediates. Cleaves cruciform DNA by making single-stranded nicks across the HJ at symmetrical positions within the homologous arms, yielding a 5'-phosphate and a 3'-hydroxyl group; requires a central core of homology in the junction. The consensus cleavage sequence is 5'-(A/T)TT(C/G)-3'. Cleavage occurs on the 3'-side of the TT dinucleotide at the point of strand exchange. HJ branch migration catalyzed by RuvA-RuvB allows RuvC to scan DNA until it finds its consensus sequence, where it cleaves and resolves the cruciform DNA. The polypeptide is Crossover junction endodeoxyribonuclease RuvC (Sinorhizobium medicae (strain WSM419) (Ensifer medicae)).